The chain runs to 217 residues: GTP-binding protein yptV2 (217 aa).

20-27 (GDSGVGKS) provides a ligand contact to GTP. The Effector region signature appears at 42–50 (FITTIGIDF). Residues 68 to 72 (DTAGQ) and 126 to 129 (NKLD) contribute to the GTP site. The interval 198–217 (QPVRLTSGSPSPAQGKSCCR) is disordered. Polar residues predominate over residues 201–211 (RLTSGSPSPAQ). Residues cysteine 215 and cysteine 216 are each lipidated (S-geranylgeranyl cysteine).

The protein belongs to the small GTPase superfamily. Rab family.

It localises to the cell membrane. Protein transport. Probably involved in vesicular traffic. This chain is GTP-binding protein yptV2 (YPTV2), found in Volvox carteri (Green alga).